The following is a 398-amino-acid chain: tRNA(Ile)-lysidine synthase (398 aa).

17–22 (SGGPDS) is an ATP binding site.

Belongs to the tRNA(Ile)-lysidine synthase family.

The protein resides in the cytoplasm. The enzyme catalyses cytidine(34) in tRNA(Ile2) + L-lysine + ATP = lysidine(34) in tRNA(Ile2) + AMP + diphosphate + H(+). Its function is as follows. Ligates lysine onto the cytidine present at position 34 of the AUA codon-specific tRNA(Ile) that contains the anticodon CAU, in an ATP-dependent manner. Cytidine is converted to lysidine, thus changing the amino acid specificity of the tRNA from methionine to isoleucine. The chain is tRNA(Ile)-lysidine synthase from Mesoplasma florum (strain ATCC 33453 / NBRC 100688 / NCTC 11704 / L1) (Acholeplasma florum).